Consider the following 235-residue polypeptide: Large ribosomal subunit protein uL3 (235 aa).

Residues 138 to 157 (SVSHRSHGSTGGRQDPGKTF) are disordered. Glutamine 151 bears the N5-methylglutamine mark.

Belongs to the universal ribosomal protein uL3 family. In terms of assembly, part of the 50S ribosomal subunit. Forms a cluster with proteins L14 and L19. Post-translationally, methylated by PrmB.

Its function is as follows. One of the primary rRNA binding proteins, it binds directly near the 3'-end of the 23S rRNA, where it nucleates assembly of the 50S subunit. This chain is Large ribosomal subunit protein uL3, found in Rhodospirillum centenum (strain ATCC 51521 / SW).